Here is a 362-residue protein sequence, read N- to C-terminus: Large ribosomal subunit protein uL2m (362 aa).

The transit peptide at 1-23 (MLSYNRFRGYLIPQIHALKLFRY) directs the protein to the mitochondrion. The tract at residues 306-362 (AMNPCDHPHGGGGGKSIGNKPSQSPWGVLAKGGYKTRRGKNVNKLLVRDRPRGKEKR) is disordered. The segment covering 351 to 362 (LVRDRPRGKEKR) has biased composition (basic and acidic residues).

The protein belongs to the universal ribosomal protein uL2 family. In terms of assembly, component of the mitochondrial large ribosomal subunit (mt-LSU). Mature yeast 74S mitochondrial ribosomes consist of a small (37S) and a large (54S) subunit. The 37S small subunit contains a 15S ribosomal RNA (15S mt-rRNA) and at least 32 different proteins. The 54S large subunit contains a 21S rRNA (21S mt-rRNA) and at least 45 different proteins. uL2m has a Na/K ligand binding site.

Its subcellular location is the mitochondrion. Its function is as follows. Component of the mitochondrial ribosome (mitoribosome), a dedicated translation machinery responsible for the synthesis of mitochondrial genome-encoded proteins, including at least some of the essential transmembrane subunits of the mitochondrial respiratory chain. The mitoribosomes are attached to the mitochondrial inner membrane and translation products are cotranslationally integrated into the membrane. The chain is Large ribosomal subunit protein uL2m (rml2) from Schizosaccharomyces pombe (strain 972 / ATCC 24843) (Fission yeast).